A 685-amino-acid polypeptide reads, in one-letter code: Acetate--CoA ligase [ADP-forming] I (685 aa).

One can recognise an ATP-grasp domain in the interval 477 to 513 (LPVLEAYGIEVAPYGIARNVDEARDIAESIGYPVVLK). Position 503–514 (503–514 (AESIGYPVVLKV)) interacts with ATP.

It in the N-terminal section; belongs to the acetate CoA ligase alpha subunit family. In the C-terminal section; belongs to the acetate CoA ligase beta subunit family. In terms of assembly, homodimer.

It catalyses the reaction acetate + ATP + CoA = acetyl-CoA + ADP + phosphate. With respect to regulation, activity requires divalent metal cations. In terms of biological role, catalyzes the reversible formation of acetate and ATP from acetyl-CoA by using ADP and phosphate. Can use other substrates such as propionyl-CoA and butyryl-CoA, but not phenylacetyl-CoA. Seems to be involved primarily in the conversion of acetyl-CoA to acetate. Participates in the degradation of branched-chain amino acids via branched-chain-acyl-CoA esters. The sequence is that of Acetate--CoA ligase [ADP-forming] I from Archaeoglobus fulgidus (strain ATCC 49558 / DSM 4304 / JCM 9628 / NBRC 100126 / VC-16).